The sequence spans 403 residues: Phosphopentomutase (403 aa).

Mn(2+) is bound by residues Asp13, Asp298, His303, Asp339, His340, and His351.

The protein belongs to the phosphopentomutase family. The cofactor is Mn(2+).

Its subcellular location is the cytoplasm. The catalysed reaction is 2-deoxy-alpha-D-ribose 1-phosphate = 2-deoxy-D-ribose 5-phosphate. It catalyses the reaction alpha-D-ribose 1-phosphate = D-ribose 5-phosphate. It functions in the pathway carbohydrate degradation; 2-deoxy-D-ribose 1-phosphate degradation; D-glyceraldehyde 3-phosphate and acetaldehyde from 2-deoxy-alpha-D-ribose 1-phosphate: step 1/2. Functionally, isomerase that catalyzes the conversion of deoxy-ribose 1-phosphate (dRib-1-P) and ribose 1-phosphate (Rib-1-P) to deoxy-ribose 5-phosphate (dRib-5-P) and ribose 5-phosphate (Rib-5-P), respectively. This Streptococcus pneumoniae (strain Hungary19A-6) protein is Phosphopentomutase.